The chain runs to 131 residues: Small ribosomal subunit protein bS6 (131 aa).

Residues 100-131 (SPMVKAKDERRERREDFANETSDDADAGDSEE) form a disordered region. Over residues 104–116 (KAKDERRERREDF) the composition is skewed to basic and acidic residues. A compositionally biased stretch (acidic residues) spans 120-131 (TSDDADAGDSEE).

Belongs to the bacterial ribosomal protein bS6 family.

Its function is as follows. Binds together with bS18 to 16S ribosomal RNA. This Erwinia tasmaniensis (strain DSM 17950 / CFBP 7177 / CIP 109463 / NCPPB 4357 / Et1/99) protein is Small ribosomal subunit protein bS6.